A 170-amino-acid chain; its full sequence is Arginine repressor (170 aa).

It belongs to the ArgR family.

It is found in the cytoplasm. It functions in the pathway amino-acid biosynthesis; L-arginine biosynthesis [regulation]. Its function is as follows. Regulates arginine biosynthesis genes. The polypeptide is Arginine repressor (Bifidobacterium longum (strain DJO10A)).